The sequence spans 357 residues: MSSSFTTTLAGMAVGMLVLATGTNPTLAQDKPTVGIAMPTKSSARWIDDGNNMVKQFQAKGYKTDLQYAEDDIPNQLAQIETMVAKNSKVLVIAAIDGTTLTDVLQQAKDRGVKVIAYDRLIRGSENVDYYATFDNFQVGVLQGSYIVDALGLKDGKGPFNIELFGGSPDDNNAYFFYNGAMSVLQPYIDSGKLTVGSGQVGMDKVSTLRWDGATAQARMDNLLSAFYGNRRVDAVLSPYDGISIGIISSLKGVGYGSPSQPMPVVTGQDAEVPSIKSILAGEQRATVFKDTRELARITVEMVDAVLGGGTAVNDTKTYDNGKKVVPAYLLKPVSVDASNWKGTLVDSGYYTEAQFK.

The N-terminal stretch at 1-20 (MSSSFTTTLAGMAVGMLVLA) is a signal peptide.

The protein belongs to the bacterial solute-binding protein 2 family.

It is found in the periplasm. Functionally, mediates chemotaxis towards D-galactose, L-arabinose and D-fucose but not towards D-fructose. Probably part of a binding-protein high affinity uptake system. This chain is Multiple sugar-binding periplasmic protein SbpA (sbpA), found in Azospirillum brasilense.